The chain runs to 155 residues: Acetylaranotin biosynthesis cluster protein L (155 aa).

It participates in mycotoxin biosynthesis. Nonribosomal peptide synthetase; part of the gene cluster that mediates the biosynthesis of acetylaranotin, a member of the epipolythiodioxopiperazine (ETP) class of toxins characterized by a disulfide-bridged cyclic dipeptide. The first step of acetylaranotin biosynthesis is performed by the NRPS ataP which produces diketopiperazine cyclo-L-Phe-L-Phe via the condensation of 2 phenylalanines (L-Phe). The ataC domain of ataTC then catalyzes the formation of bishydroxylation of cyclo-L-Phe-L-Phe. The glutathione S-transferase domain ataG in ataIMG further catalyzes the conjugation of two glutathiones to the bishydroxylated intermediate. Next, the dipeptidase ataJ removes the Glu residues. The following step is performed by the carbon sulfur lyase domain ataI of ataIMG which may convert the bis-cysteinyl adduct to yield an epidithiol intermediate. The ataT domain from ataTC then catalyzes the oxidation of the free dithiols, followed by a cyclization step catalyzed by the cytochrome P450 ataF. AtaF probably acts as an epoxidase to promote a dual epoxidation formation at C8 and C9 along with C8' and C9', followed by the spontaneous nucleophilic attack of the amide nitrogens N10 and N10' to yield an intermediate with the pyrrolidine partial structure. The final steps of acetylaranotin biosynthesis involve the acetylation and ring rearrangement of an epitetrathiodiketopiperazine intermediate to produce acetylaranotin. AtaH probably catalyzes the acetylation of epitetrathiodiketopiperazine to produce a diacetate and ataY is responsible for the formation of the dihydrooxepin moiety that converts the diacetate intermediate to acetylaranotin via acetylapoaranotin. Both enzymes could function independently in the absence of the other. The specific function of ataL within the pathway has still to be determined. The acetylaranotin bis-thiomethyltransferase ataS located outside of acetylaranotin gene cluster is the main thiomethyltransferase responsible for converting acetylaranotin and its related intermediates to their methylated forms. The chain is Acetylaranotin biosynthesis cluster protein L from Aspergillus terreus (strain NIH 2624 / FGSC A1156).